Consider the following 199-residue polypeptide: 3-isopropylmalate dehydratase small subunit (199 aa).

It belongs to the LeuD family. LeuD type 1 subfamily. Heterodimer of LeuC and LeuD.

The catalysed reaction is (2R,3S)-3-isopropylmalate = (2S)-2-isopropylmalate. Its pathway is amino-acid biosynthesis; L-leucine biosynthesis; L-leucine from 3-methyl-2-oxobutanoate: step 2/4. In terms of biological role, catalyzes the isomerization between 2-isopropylmalate and 3-isopropylmalate, via the formation of 2-isopropylmaleate. The chain is 3-isopropylmalate dehydratase small subunit from Kocuria rhizophila (strain ATCC 9341 / DSM 348 / NBRC 103217 / DC2201).